Consider the following 158-residue polypeptide: Ribosome-binding factor A (158 aa).

The segment at 127 to 158 is disordered; that stretch reads RQGAVHAGDADPYKESAAEEPAAYEDDERRPD. A compositionally biased stretch (basic and acidic residues) spans 134 to 143; that stretch reads GDADPYKESA.

Belongs to the RbfA family. In terms of assembly, monomer. Binds 30S ribosomal subunits, but not 50S ribosomal subunits or 70S ribosomes.

Its subcellular location is the cytoplasm. Functionally, one of several proteins that assist in the late maturation steps of the functional core of the 30S ribosomal subunit. Associates with free 30S ribosomal subunits (but not with 30S subunits that are part of 70S ribosomes or polysomes). Required for efficient processing of 16S rRNA. May interact with the 5'-terminal helix region of 16S rRNA. This chain is Ribosome-binding factor A, found in Mycobacteroides abscessus (strain ATCC 19977 / DSM 44196 / CCUG 20993 / CIP 104536 / JCM 13569 / NCTC 13031 / TMC 1543 / L948) (Mycobacterium abscessus).